Consider the following 698-residue polypeptide: Superoxide-generating NADPH oxidase heavy chain subunit B (698 aa).

Disordered regions lie at residues 1–68 (MNEK…NITP) and 134–158 (NDQV…NNKN). Topologically, residues 1–184 (MNEKKELQQE…KIRGWWWHRG (184 aa)) are cytoplasmic. Polar residues-rich tracts occupy residues 16-25 (FQTPKNQQLE) and 33-53 (EISS…PISQ). Low complexity-rich tracts occupy residues 54-65 (NDNSNNENESLN) and 138-156 (NSNT…TNNN). A helical membrane pass occupies residues 185 to 205 (ISTYIMLFYIALNIGVGVHMF). Over 206–229 (YNMYHSDIFKFLGLSFCFSRTAAR) the chain is Extracellular. Positions 225–375 (RTAARLINLN…LFIPFYILLC (151 aa)) constitute a Ferric oxidoreductase domain. Residues 230–250 (LINLNSAVILLPVLRNFLSWL) form a helical membrane-spanning segment. Topologically, residues 251 to 269 (RGTIVNNYIPIDKHLNFHK) are cytoplasmic. The heme site is built by histidine 268 and histidine 282. The helical transmembrane segment at 270 to 290 (LCAFMLFCCTIIHCVGHYISF) threads the bilayer. Residues 291-324 (KKINDDVLKIDDGKSVAGDYLNININNFPDEKYL) lie on the Extracellular side of the membrane. A helical transmembrane segment spans residues 325-345 (FFKSVPGITGHIMLLILILIV). The Cytoplasmic segment spans residues 346–355 (SSSMWRIRRP). The helical transmembrane segment at 356–376 (MFEIFWYVHHLFIPFYILLCF) threads the bilayer. 2 residues coordinate heme: histidine 364 and histidine 377. At 377–388 (HGYSKILKKDPQ) the chain is on the extracellular side. Residues 389-409 (SWMWIIAPFILYSIERLIRIA) form a helical membrane-spanning segment. The 125-residue stretch at 404–528 (RLIRIARSKK…DGPFGAPAEN (125 aa)) folds into the FAD-binding FR-type domain. The Cytoplasmic portion of the chain corresponds to 410-698 (RSKKRVILEK…CHLIFHKENF (289 aa)). 460–466 (HPFTITS) contributes to the FAD binding site.

Composed of a heavy chain and a light chain. FAD is required as a cofactor.

It localises to the membrane. In terms of biological role, critical component of the membrane-bound oxidase that generates superoxide. It is the terminal component of a respiratory chain that transfers single electrons from cytoplasmic NADPH across the plasma membrane to molecular oxygen on the exterior. The sequence is that of Superoxide-generating NADPH oxidase heavy chain subunit B (noxB) from Dictyostelium discoideum (Social amoeba).